Here is a 115-residue protein sequence, read N- to C-terminus: Large ribosomal subunit protein bL19 (115 aa).

Belongs to the bacterial ribosomal protein bL19 family.

Its function is as follows. This protein is located at the 30S-50S ribosomal subunit interface and may play a role in the structure and function of the aminoacyl-tRNA binding site. In Brevibacillus brevis (strain 47 / JCM 6285 / NBRC 100599), this protein is Large ribosomal subunit protein bL19.